The chain runs to 460 residues: NADH-ubiquinone oxidoreductase chain 4 (460 aa).

13 consecutive transmembrane segments (helical) span residues 20 to 42 (AKWL…LSWL), 61 to 81 (PLST…VLAS), 94 to 113 (RTYI…AFGA), 117 to 139 (IMFY…RWGN), 148 to 168 (TYFL…LLLL), 195 to 215 (LWWA…GVHL), 225 to 245 (PIAG…YGMM), 258 to 278 (LAYP…SICL), 285 to 304 (SLIA…GILI), 308 to 330 (WGFT…LFCL), 351 to 371 (MILP…LALP), 394 to 414 (LLLT…LFLM), and 436 to 456 (LLIT…ELMW).

The protein belongs to the complex I subunit 4 family.

The protein localises to the mitochondrion membrane. It carries out the reaction a ubiquinone + NADH + 5 H(+)(in) = a ubiquinol + NAD(+) + 4 H(+)(out). Functionally, core subunit of the mitochondrial membrane respiratory chain NADH dehydrogenase (Complex I) that is believed to belong to the minimal assembly required for catalysis. Complex I functions in the transfer of electrons from NADH to the respiratory chain. The immediate electron acceptor for the enzyme is believed to be ubiquinone. This chain is NADH-ubiquinone oxidoreductase chain 4 (MT-ND4), found in Salmo salar (Atlantic salmon).